An 83-amino-acid polypeptide reads, in one-letter code: ATP synthase subunit 9, mitochondrial (83 aa).

The next 2 membrane-spanning stretches (helical) occupy residues I8–L28 and S45–S72.

It belongs to the ATPase C chain family. As to quaternary structure, F-type ATPases have 2 components, CF(1) - the catalytic core - and CF(0) - the membrane proton channel. CF(1) has five subunits: alpha(3), beta(3), gamma(1), delta(1), epsilon(1). CF(0) has three main subunits: a, b and c.

The protein resides in the mitochondrion membrane. This protein is one of the chains of the nonenzymatic membrane component (F0) of mitochondrial ATPase. The polypeptide is ATP synthase subunit 9, mitochondrial (ATP9) (Helianthus annuus (Common sunflower)).